The chain runs to 319 residues: Cytochrome f (319 aa).

A signal peptide spans 1-34 (MQNRNTYEWTKKMTRLISVLVMIHIITRTSISNA). Residues Y35, C55, C58, and H59 each coordinate heme. The helical transmembrane segment at 285-305 (VKGLLLFLASVILAQIFLVLK) threads the bilayer.

The protein belongs to the cytochrome f family. The 4 large subunits of the cytochrome b6-f complex are cytochrome b6, subunit IV (17 kDa polypeptide, petD), cytochrome f and the Rieske protein, while the 4 small subunits are PetG, PetL, PetM and PetN. The complex functions as a dimer. Heme serves as cofactor.

The protein resides in the plastid. It is found in the chloroplast thylakoid membrane. Its function is as follows. Component of the cytochrome b6-f complex, which mediates electron transfer between photosystem II (PSII) and photosystem I (PSI), cyclic electron flow around PSI, and state transitions. The protein is Cytochrome f of Pinus koraiensis (Korean pine).